The primary structure comprises 420 residues: Nucleoporin NUP42 (420 aa).

The segment at 1-25 (MTICQFFLQGRCRFGDRCWNEHPGA) adopts a C3H1-type zinc-finger fold. One copy of the FG 1 repeat lies at 14-15 (FG). The disordered stretch occupies residues 25–111 (ARGAGGARQP…FASPLSDEQK (87 aa)). Over residues 42-67 (SGNNRRGWNASSQRYSNVIQPSSFPK) the composition is skewed to polar residues. 10 FG repeats span residues 82–83 (FG), 95–96 (FG), 218–219 (FG), 220–221 (FG), 228–229 (FG), 265–266 (FG), 271–272 (FG), 288–289 (FG), 345–346 (FG), and 364–365 (FG). Over residues 87-102 (SGASTSRGFGSSQNPF) the composition is skewed to polar residues. The disordered stretch occupies residues 323–345 (MAASPSGSTTAPPLRSGSSVVGF). The tract at residues 365–420 (GGSGISTSVLASGAADNALFTPRDQLMKEELEQFQSQRFTLGKIPLKPPPVELLTV) is interaction with GLE1.

As to quaternary structure, probable component of the nuclear pore complex (NPC). Interacts with nuclear export protein NXF1. Interacts with GLE1. Able to form a heterotrimer with NUP155 and GLE1 in vitro. Interacts with XPO1. Post-translationally, O-glycosylated.

Its subcellular location is the nucleus. It is found in the nuclear pore complex. The protein resides in the nucleus membrane. In terms of biological role, required for the export of mRNAs containing poly(A) tails from the nucleus into the cytoplasm. The protein is Nucleoporin NUP42 (Nup42) of Mus musculus (Mouse).